The following is a 334-amino-acid chain: Dihydroorotate dehydrogenase (quinone) (334 aa).

Residues 59–63 and threonine 83 contribute to the FMN site; that span reads AGLDK. Residue lysine 63 coordinates substrate. Position 108-112 (108-112) interacts with substrate; the sequence is NRMGF. Positions 136 and 169 each coordinate FMN. Asparagine 169 provides a ligand contact to substrate. Serine 172 (nucleophile) is an active-site residue. Asparagine 174 serves as a coordination point for substrate. Positions 214 and 242 each coordinate FMN. Residue 243–244 participates in substrate binding; that stretch reads NT. FMN is bound by residues glycine 265, glycine 294, and 315-316; that span reads YS.

Belongs to the dihydroorotate dehydrogenase family. Type 2 subfamily. In terms of assembly, monomer. The cofactor is FMN.

Its subcellular location is the cell membrane. It catalyses the reaction (S)-dihydroorotate + a quinone = orotate + a quinol. The protein operates within pyrimidine metabolism; UMP biosynthesis via de novo pathway; orotate from (S)-dihydroorotate (quinone route): step 1/1. Catalyzes the conversion of dihydroorotate to orotate with quinone as electron acceptor. The chain is Dihydroorotate dehydrogenase (quinone) from Acinetobacter baumannii (strain AB0057).